The primary structure comprises 204 residues: CASP-like protein 1B2 (204 aa).

At 1-28 (MASKGEEKPELVGSKQGIVSVTKAKHDQ) the chain is on the cytoplasmic side. The helical transmembrane segment at 29-49 (IVLVLRVVAFLATASATIVMG) threads the bilayer. The Extracellular portion of the chain corresponds to 50–80 (LNQETKTLLVGTIGTTPIRATLKAKFQHTPA). The helical transmembrane segment at 81 to 101 (FVFFVVANGLASVYNLVMLGV) threads the bilayer. Over 102-114 (DVFGRKLDCKGLR) the chain is Cytoplasmic. Residues 115–135 (LVIISILDMVIVAVVAAGASS) traverse the membrane as a helical segment. Topologically, residues 136 to 168 (AAFMAELGKNGNSHAKWNKICDKFESFCHQGGG) are extracellular. A helical transmembrane segment spans residues 169–189 (ALIPSFIALLLLFLISAISII). The Cytoplasmic portion of the chain corresponds to 190 to 204 (TLHNQKLTSPHATTP).

It belongs to the Casparian strip membrane proteins (CASP) family. In terms of assembly, homodimer and heterodimers.

Its subcellular location is the cell membrane. The polypeptide is CASP-like protein 1B2 (Vitis vinifera (Grape)).